Reading from the N-terminus, the 283-residue chain is U3 small nucleolar ribonucleoprotein protein IMP4 (283 aa).

The region spanning 79–260 (PKVIVTTSRD…LYELTLGTLE (182 aa)) is the Brix domain.

As to quaternary structure, component of a heterotrimeric complex containing IMP3, IMP4 and MPP10.

The protein localises to the nucleus. The protein resides in the nucleolus. In terms of biological role, component of the U3 small nucleolar ribonucleoprotein. Required for the early cleavages at sites A0, A1 and A2 during 18S ribosomal pre-RNA processing. This chain is U3 small nucleolar ribonucleoprotein protein IMP4 (IMP4), found in Eremothecium gossypii (strain ATCC 10895 / CBS 109.51 / FGSC 9923 / NRRL Y-1056) (Yeast).